The chain runs to 290 residues: Chloride intracellular channel exc-4 (290 aa).

Residues 37 to 57 (LFCQEFWMELYALYEIGVARV) form a helical membrane-spanning segment.

It belongs to the chloride channel CLIC family. As to quaternary structure, monomer. Expressed in the secretory system, hypodermis, vulva, pharyngeal muscle, rectal gland, tubular rectal epithelium cells, and tubular neuronal support cells in the head and tail.

Its subcellular location is the cytoplasm. It localises to the membrane. Its function is as follows. May insert into membranes and form chloride ion channels. Involved in the formation of the excretory canal. Required to prevent cystic lumenal expansions in the excretory cell. Not required for formation of the initial tube, but is required for regulating the size of the tube lumen as it grows. The sequence is that of Chloride intracellular channel exc-4 (exc-4) from Caenorhabditis elegans.